Reading from the N-terminus, the 455-residue chain is Kynurenine--oxoglutarate transaminase 3 (455 aa).

A substrate-binding site is contributed by Gly71. Position 116 is an N6-acetyllysine; alternate (Lys116). The residue at position 116 (Lys116) is an N6-succinyllysine; alternate. Asn218 contacts substrate. Position 280 is an N6-(pyridoxal phosphate)lysine (Lys280). A substrate-binding site is contributed by Arg430.

This sequence belongs to the class-I pyridoxal-phosphate-dependent aminotransferase family. Homodimer. Requires pyridoxal 5'-phosphate as cofactor.

It catalyses the reaction L-kynurenine + 2-oxoglutarate = kynurenate + L-glutamate + H2O. The enzyme catalyses L-kynurenine + glyoxylate = kynurenate + glycine + H2O. It carries out the reaction 3-hydroxy-L-kynurenine + glyoxylate = xanthurenate + glycine + H2O. The catalysed reaction is an S-substituted L-cysteine + H2O = a thiol + pyruvate + NH4(+). The protein operates within amino-acid degradation; L-kynurenine degradation; kynurenate from L-kynurenine: step 1/2. In terms of biological role, catalyzes the irreversible transamination of the L-tryptophan metabolite L-kynurenine to form kynurenic acid (KA), an intermediate in the tryptophan catabolic pathway which is also a broad spectrum antagonist of the three ionotropic excitatory amino acid receptors among others. May catalyze the beta-elimination of S-conjugates and Se-conjugates of L-(seleno)cysteine, resulting in the cleavage of the C-S or C-Se bond. Has transaminase activity towards L-kynurenine, tryptophan, phenylalanine, serine, cysteine, methionine, histidine, glutamine and asparagine with glyoxylate as an amino group acceptor (in vitro). Has lower activity with 2-oxoglutarate as amino group acceptor (in vitro). This is Kynurenine--oxoglutarate transaminase 3 from Bos taurus (Bovine).